We begin with the raw amino-acid sequence, 319 residues long: tRNA-modifying protein YgfZ (319 aa).

Folate-binding residues include tryptophan 27 and tryptophan 189.

Belongs to the tRNA-modifying YgfZ family.

The protein localises to the cytoplasm. In terms of biological role, folate-binding protein involved in regulating the level of ATP-DnaA and in the modification of some tRNAs. It is probably a key factor in regulatory networks that act via tRNA modification, such as initiation of chromosomal replication. This Buchnera aphidicola subsp. Schizaphis graminum (strain Sg) protein is tRNA-modifying protein YgfZ.